The following is a 229-amino-acid chain: MANKWRCSIALAVLSLTGCAYIPQKPLVEGATTAAPSVATAPVPNGAIFQVVQPVYYGYQPLFEDRRPRNIGDTLTITLQENVSASKNSSANASRNGKNTFSAALTPRFLKGLIGGDKTDLDMEAENTFGGKGGANANNTFKGTITVTVDRLLANGNLHVVGEKQIAINQGTEFIRFSGVVNPRTINANNTVSSNQVADARIEYVGNGYINEAQNMGWLQRFFLNVAPF.

Positions 1-18 (MANKWRCSIALAVLSLTG) are cleaved as a signal peptide. Residue Cys19 is the site of N-palmitoyl cysteine attachment. Cys19 is lipidated: S-diacylglycerol cysteine.

Belongs to the FlgH family. The basal body constitutes a major portion of the flagellar organelle and consists of four rings (L,P,S, and M) mounted on a central rod.

It localises to the cell outer membrane. The protein resides in the bacterial flagellum basal body. Its function is as follows. Assembles around the rod to form the L-ring and probably protects the motor/basal body from shearing forces during rotation. This is Flagellar L-ring protein (flgH) from Photorhabdus laumondii subsp. laumondii (strain DSM 15139 / CIP 105565 / TT01) (Photorhabdus luminescens subsp. laumondii).